We begin with the raw amino-acid sequence, 232 residues long: Large ribosomal subunit protein uL1 (232 aa).

Belongs to the universal ribosomal protein uL1 family. Part of the 50S ribosomal subunit.

Functionally, binds directly to 23S rRNA. The L1 stalk is quite mobile in the ribosome, and is involved in E site tRNA release. Its function is as follows. Protein L1 is also a translational repressor protein, it controls the translation of the L11 operon by binding to its mRNA. In Bartonella bacilliformis (strain ATCC 35685 / KC583 / Herrer 020/F12,63), this protein is Large ribosomal subunit protein uL1.